The sequence spans 512 residues: Cytochrome P450 1A1 (512 aa).

The segment at 29–40 (SRPRVPKGLKNP) is mitochondrial targeting signal. Ser-67 carries an O-linked (GlcNAc) serine glycan. Phe-224 contacts substrate. A heme-binding site is contributed by Cys-457.

Belongs to the cytochrome P450 family. In terms of assembly, interacts with cytosolic chaperones HSP70 and HSP90; this interaction is required for initial targeting to mitochondria. Interacts (via mitochondrial targeting signal) with TOMM40 (via N-terminus); this interaction is required for translocation across the mitochondrial outer membrane. Heme is required as a cofactor.

It localises to the endoplasmic reticulum membrane. The protein resides in the mitochondrion inner membrane. Its subcellular location is the microsome membrane. The protein localises to the cytoplasm. The enzyme catalyses an organic molecule + reduced [NADPH--hemoprotein reductase] + O2 = an alcohol + oxidized [NADPH--hemoprotein reductase] + H2O + H(+). The catalysed reaction is estrone + reduced [NADPH--hemoprotein reductase] + O2 = 2-hydroxyestrone + oxidized [NADPH--hemoprotein reductase] + H2O + H(+). It catalyses the reaction estrone + reduced [NADPH--hemoprotein reductase] + O2 = 4-hydroxyestrone + oxidized [NADPH--hemoprotein reductase] + H2O + H(+). It carries out the reaction estrone + reduced [NADPH--hemoprotein reductase] + O2 = 6alpha-hydroxyestrone + oxidized [NADPH--hemoprotein reductase] + H2O + H(+). The enzyme catalyses estrone + reduced [NADPH--hemoprotein reductase] + O2 = 15alpha-hydroxyestrone + oxidized [NADPH--hemoprotein reductase] + H2O + H(+). The catalysed reaction is estrone + reduced [NADPH--hemoprotein reductase] + O2 = 16alpha-hydroxyestrone + oxidized [NADPH--hemoprotein reductase] + H2O + H(+). It catalyses the reaction 17beta-estradiol + reduced [NADPH--hemoprotein reductase] + O2 = 2-hydroxy-17beta-estradiol + oxidized [NADPH--hemoprotein reductase] + H2O + H(+). It carries out the reaction 17beta-estradiol + reduced [NADPH--hemoprotein reductase] + O2 = 4-hydroxy-17beta-estradiol + oxidized [NADPH--hemoprotein reductase] + H2O + H(+). The enzyme catalyses 17beta-estradiol + reduced [NADPH--hemoprotein reductase] + O2 = 6alpha-hydroxy-17beta-estradiol + oxidized [NADPH--hemoprotein reductase] + H2O + H(+). The catalysed reaction is 17beta-estradiol + reduced [NADPH--hemoprotein reductase] + O2 = 7alpha-hydroxy-17beta-estradiol + oxidized [NADPH--hemoprotein reductase] + H2O + H(+). It catalyses the reaction 17beta-estradiol + reduced [NADPH--hemoprotein reductase] + O2 = 15alpha-hydroxy-17beta-estradiol + oxidized [NADPH--hemoprotein reductase] + H2O + H(+). It carries out the reaction (5Z,8Z,11Z)-eicosatrienoate + reduced [NADPH--hemoprotein reductase] + O2 = 19-hydroxy-(5Z,8Z,11Z)-eicosatrienoate + oxidized [NADPH--hemoprotein reductase] + H2O + H(+). The enzyme catalyses (5Z,8Z,11Z,14Z)-eicosatetraenoate + reduced [NADPH--hemoprotein reductase] + O2 = 16-hydroxy-(5Z,8Z,11Z,14Z)-eicosatetraenoate + oxidized [NADPH--hemoprotein reductase] + H2O + H(+). The catalysed reaction is (5Z,8Z,11Z,14Z)-eicosatetraenoate + reduced [NADPH--hemoprotein reductase] + O2 = 17-hydroxy-(5Z,8Z,11Z,14Z)-eicosatetraenoate + oxidized [NADPH--hemoprotein reductase] + H2O + H(+). It catalyses the reaction (5Z,8Z,11Z,14Z)-eicosatetraenoate + reduced [NADPH--hemoprotein reductase] + O2 = 18-hydroxy-(5Z,8Z,11Z,14Z)-eicosatetraenoate + oxidized [NADPH--hemoprotein reductase] + H2O + H(+). It carries out the reaction (5Z,8Z,11Z,14Z)-eicosatetraenoate + reduced [NADPH--hemoprotein reductase] + O2 = 19-hydroxy-(5Z,8Z,11Z,14Z)-eicosatetraenoate + oxidized [NADPH--hemoprotein reductase] + H2O + H(+). The enzyme catalyses (5Z,8Z,11Z,14Z,17Z)-eicosapentaenoate + reduced [NADPH--hemoprotein reductase] + O2 = 19-hydroxy-(5Z,8Z,11Z,14Z,17Z)-eicosapentaenoate + oxidized [NADPH--hemoprotein reductase] + H2O + H(+). The catalysed reaction is (5Z,8Z,11Z,14Z)-eicosatetraenoate + reduced [NADPH--hemoprotein reductase] + O2 = (8R,9S)-epoxy-(5Z,11Z,14Z)-eicosatrienoate + oxidized [NADPH--hemoprotein reductase] + H2O + H(+). It catalyses the reaction (5Z,8Z,11Z,14Z)-eicosatetraenoate + reduced [NADPH--hemoprotein reductase] + O2 = (11R,12S)-epoxy-(5Z,8Z,14Z)-eicosatrienoate + oxidized [NADPH--hemoprotein reductase] + H2O + H(+). It carries out the reaction (5Z,8Z,11Z,14Z)-eicosatetraenoate + reduced [NADPH--hemoprotein reductase] + O2 = (14S,15R)-epoxy-(5Z,8Z,11Z)-eicosatrienoate + oxidized [NADPH--hemoprotein reductase] + H2O + H(+). The enzyme catalyses (5Z,8Z,11Z,14Z)-eicosatetraenoate + reduced [NADPH--hemoprotein reductase] + O2 = (14R,15S)-epoxy-(5Z,8Z,11Z)-eicosatrienoate + oxidized [NADPH--hemoprotein reductase] + H2O + H(+). The catalysed reaction is (5Z,8Z,11Z,14Z,17Z)-eicosapentaenoate + reduced [NADPH--hemoprotein reductase] + O2 = (17R,18S)-epoxy-(5Z,8Z,11Z,14Z)-eicosatetraenoate + oxidized [NADPH--hemoprotein reductase] + H2O + H(+). It catalyses the reaction (4Z,7Z,10Z,13Z,16Z,19Z)-docosahexaenoate + reduced [NADPH--hemoprotein reductase] + O2 = (19S,20R)-epoxy-(4Z,7Z,10Z,13Z,16Z)-docosapentaenoate + oxidized [NADPH--hemoprotein reductase] + H2O + H(+). It carries out the reaction (4Z,7Z,10Z,13Z,16Z,19Z)-docosahexaenoate + reduced [NADPH--hemoprotein reductase] + O2 = (19R,20S)-epoxy-(4Z,7Z,10Z,13Z,16Z)-docosapentaenoate + oxidized [NADPH--hemoprotein reductase] + H2O + H(+). The enzyme catalyses all-trans-retinol + reduced [NADPH--hemoprotein reductase] + O2 = all-trans-retinal + oxidized [NADPH--hemoprotein reductase] + 2 H2O + H(+). The catalysed reaction is all-trans-retinal + reduced [NADPH--hemoprotein reductase] + O2 = all-trans-retinoate + oxidized [NADPH--hemoprotein reductase] + H2O + 2 H(+). It catalyses the reaction (13S)-hydroperoxy-(9Z,11E)-octadecadienoate = 13-oxo-(9Z,11E)-octadecadienoate + H2O. It carries out the reaction (12S)-hydroperoxy-(5Z,8Z,10E,14Z)-eicosatetraenoate = 12-oxo-(5Z,8Z,10E,14Z)-eicosatetraenoate + H2O. The enzyme catalyses (15S)-hydroperoxy-(5Z,8Z,11Z,13E)-eicosatetraenoate = 15-oxo-(5Z,8Z,11Z,13E)-eicosatetraenoate + H2O. The catalysed reaction is (5S)-hydroperoxy-(6E,8Z,11Z,14Z)-eicosatetraenoate = 5-oxo-(6E,8Z,11Z,14Z)-eicosatetraenoate + H2O. It functions in the pathway steroid hormone biosynthesis. The protein operates within lipid metabolism; fatty acid metabolism. Its pathway is cofactor metabolism; retinol metabolism. Its function is as follows. A cytochrome P450 monooxygenase involved in the metabolism of various endogenous substrates, including fatty acids, steroid hormones and vitamins. Mechanistically, uses molecular oxygen inserting one oxygen atom into a substrate, and reducing the second into a water molecule, with two electrons provided by NADPH via cytochrome P450 reductase (CPR; NADPH-ferrihemoprotein reductase). Catalyzes the hydroxylation of carbon-hydrogen bonds. Exhibits high catalytic activity for the formation of hydroxyestrogens from estrone (E1) and 17beta-estradiol (E2), namely 2-hydroxy E1 and E2, as well as D-ring hydroxylated E1 and E2 at the C15alpha and C16alpha positions. Displays different regioselectivities for polyunsaturated fatty acids (PUFA) hydroxylation. Catalyzes the epoxidation of double bonds of certain PUFA. Converts arachidonic acid toward epoxyeicosatrienoic acid (EET) regioisomers, 8,9-, 11,12-, and 14,15-EET, that function as lipid mediators in the vascular system. Displays an absolute stereoselectivity in the epoxidation of eicosapentaenoic acid (EPA) producing the 17(R),18(S) enantiomer. May play an important role in all-trans retinoic acid biosynthesis in extrahepatic tissues. Catalyzes two successive oxidative transformation of all-trans retinol to all-trans retinal and then to the active form all-trans retinoic acid. May also participate in eicosanoids metabolism by converting hydroperoxide species into oxo metabolites (lipoxygenase-like reaction, NADPH-independent). The chain is Cytochrome P450 1A1 (CYP1A1) from Macaca mulatta (Rhesus macaque).